Reading from the N-terminus, the 68-residue chain is DNA-directed RNA polymerase subunit omega (68 aa).

Belongs to the RNA polymerase subunit omega family. In terms of assembly, the RNAP catalytic core consists of 2 alpha, 1 beta, 1 beta' and 1 omega subunit. When a sigma factor is associated with the core the holoenzyme is formed, which can initiate transcription.

The catalysed reaction is RNA(n) + a ribonucleoside 5'-triphosphate = RNA(n+1) + diphosphate. Functionally, promotes RNA polymerase assembly. Latches the N- and C-terminal regions of the beta' subunit thereby facilitating its interaction with the beta and alpha subunits. The polypeptide is DNA-directed RNA polymerase subunit omega (Desulforapulum autotrophicum (strain ATCC 43914 / DSM 3382 / VKM B-1955 / HRM2) (Desulfobacterium autotrophicum)).